An 88-amino-acid chain; its full sequence is Putative membrane protein insertion efficiency factor (88 aa).

It belongs to the UPF0161 family.

The protein resides in the cell inner membrane. Functionally, could be involved in insertion of integral membrane proteins into the membrane. This Burkholderia vietnamiensis (strain G4 / LMG 22486) (Burkholderia cepacia (strain R1808)) protein is Putative membrane protein insertion efficiency factor.